The following is a 345-amino-acid chain: uncharacterized protein (345 aa).

Solcar repeat units lie at residues 80–153 (MSFF…MKSR), 162–246 (SDPQ…LKLK), and 256–339 (NLAH…ILNF). The next 6 membrane-spanning stretches (helical) occupy residues 83–103 (FEAL…LFPI), 128–148 (GLGS…TTYE), 220–240 (AGYG…FPIW), 262–282 (AISG…FDVV), 296–316 (VFTI…KGIV), and 319–339 (VLWL…ILNF).

The protein belongs to the mitochondrial carrier (TC 2.A.29) family.

The protein localises to the mitochondrion inner membrane. This is an uncharacterized protein from Schizosaccharomyces pombe (strain 972 / ATCC 24843) (Fission yeast).